Here is a 228-residue protein sequence, read N- to C-terminus: Ankyrin repeat domain-containing protein 46 (228 aa).

4 ANK repeats span residues 11-40 (QTSV…DPNI), 44-73 (RGRT…DLLA), 77-103 (QGNT…KIDI), and 107-138 (NGST…EVKG). Residues 195–215 (VLLLLVVIALLSLGIAYYVSG) traverse the membrane as a helical segment.

The protein resides in the membrane. The chain is Ankyrin repeat domain-containing protein 46 (ankrd46) from Danio rerio (Zebrafish).